The following is a 367-amino-acid chain: uncharacterized protein (367 aa).

The next 4 helical transmembrane spans lie at 35–55 (YVYD…IILW), 61–81 (LALF…TLLV), 92–112 (EVAD…TAAG), and 113–133 (LMFS…PLFL). Disordered stretches follow at residues 177-220 (KLPK…PASI), 249-283 (SNIK…YYTP), and 296-367 (GDIS…SRPK). Positions 257–274 (NTKSILHTPLNRRSPSGS) are enriched in polar residues. The segment covering 302 to 312 (SSSSTSSKTST) has biased composition (low complexity). The span at 323-342 (SRSERNARHHRNKEDHRQNQ) shows a compositional bias: basic and acidic residues. Residues 357–367 (PRRKKYRSRPK) show a composition bias toward basic residues.

The protein belongs to the chlamydial CPn_0443/CT_005/TC_0273 family.

The protein localises to the cell membrane. This is an uncharacterized protein from Chlamydia muridarum (strain MoPn / Nigg).